A 233-amino-acid polypeptide reads, in one-letter code: Cell number regulator 8 (233 aa).

2 helical membrane-spanning segments follow: residues 85-101 (VCLL…GSNV) and 115-138 (CLPY…APWF).

The protein belongs to the cornifelin family. Expressed in roots, coleoptiles, leaves, stalks, apical meristems, immature ears, embryos, endosperm, pericarp, silks, tassel spikelets and pollen. Highest expression in the pericarp and stalks.

It is found in the membrane. This is Cell number regulator 8 (CNR8) from Zea mays (Maize).